Reading from the N-terminus, the 92-residue chain is Protein RESPONSE TO LOW SULFUR 4 (92 aa).

Residues 8-63 are a coiled coil; the sequence is VMVAASEVEELRQKNGEMEKAVEEMRKEMLQLWRRTQVAEEAEEHLCSQLAELEAE.

Its function is as follows. Required for flower development in short-day conditions. This chain is Protein RESPONSE TO LOW SULFUR 4, found in Arabidopsis thaliana (Mouse-ear cress).